Reading from the N-terminus, the 371-residue chain is Chaperone protein DnaJ (371 aa).

The J domain occupies 5 to 69 (DYYEVLGLSK…QKRAQYDQFG (65 aa)). The CR-type zinc finger occupies 133–215 (GKELNVEIPV…CHGSGKVRKR (83 aa)). Zn(2+) is bound by residues Cys-146, Cys-149, Cys-163, Cys-166, Cys-189, Cys-192, Cys-203, and Cys-206. CXXCXGXG motif repeat units follow at residues 146 to 153 (CDTCKGSG), 163 to 170 (CKHCSGSG), 189 to 196 (CGHCSGTG), and 203 to 210 (CTTCHGSG).

The protein belongs to the DnaJ family. As to quaternary structure, homodimer. Requires Zn(2+) as cofactor.

The protein resides in the cytoplasm. Its function is as follows. Participates actively in the response to hyperosmotic and heat shock by preventing the aggregation of stress-denatured proteins and by disaggregating proteins, also in an autonomous, DnaK-independent fashion. Unfolded proteins bind initially to DnaJ; upon interaction with the DnaJ-bound protein, DnaK hydrolyzes its bound ATP, resulting in the formation of a stable complex. GrpE releases ADP from DnaK; ATP binding to DnaK triggers the release of the substrate protein, thus completing the reaction cycle. Several rounds of ATP-dependent interactions between DnaJ, DnaK and GrpE are required for fully efficient folding. Also involved, together with DnaK and GrpE, in the DNA replication of plasmids through activation of initiation proteins. The sequence is that of Chaperone protein DnaJ from Bacillus cereus (strain ATCC 10987 / NRS 248).